A 422-amino-acid chain; its full sequence is Glycine amidinotransferase, mitochondrial (422 aa).

The transit peptide at 1-37 directs the protein to the mitochondrion; the sequence is MLRVRCLRGGSRGAEAAHFIGSRLGRAFTGWVQRSLQ. Active-site residues include Asp-253 and His-302. Cys-406 (amidino-cysteine intermediate) is an active-site residue. Thr-416 is subject to Phosphothreonine.

Belongs to the amidinotransferase family. Homodimer.

It localises to the mitochondrion inner membrane. The enzyme catalyses L-arginine + glycine = guanidinoacetate + L-ornithine. The protein operates within amine and polyamine biosynthesis; creatine biosynthesis; creatine from L-arginine and glycine: step 1/2. Its function is as follows. Catalyzes the biosynthesis of guanidinoacetate, the immediate precursor of creatine. Creatine plays a vital role in energy metabolism in muscle tissues. May play a role in embryonic and central nervous system development. The chain is Glycine amidinotransferase, mitochondrial from Gallus gallus (Chicken).